Consider the following 343-residue polypeptide: 2-deoxy-scyllo-inosamine dehydrogenase (343 aa).

7 residues coordinate Zn(2+): cysteine 37, histidine 59, cysteine 91, cysteine 94, cysteine 97, cysteine 105, and glutamate 146.

It belongs to the zinc-containing alcohol dehydrogenase family. DOIA dehydrogenase subfamily. Zn(2+) is required as a cofactor.

The enzyme catalyses 2-deoxy-scyllo-inosamine + NADP(+) = 3-amino-2,3-dideoxy-scyllo-inosose + NADPH + H(+). It catalyses the reaction 2-deoxy-scyllo-inosamine + NAD(+) = 3-amino-2,3-dideoxy-scyllo-inosose + NADH + H(+). It participates in metabolic intermediate biosynthesis; 2-deoxystreptamine biosynthesis; 2-deoxystreptamine from D-glucose 6-phosphate: step 3/4. The protein operates within antibiotic biosynthesis; kanamycin biosynthesis. Catalyzes the oxidation of 2-deoxy-scyllo-inosamine (DOIA) with NAD(+) or NADP(+), forming 3-amino-2,3-dideoxy-scyllo-inosose (amino-DOI). The sequence is that of 2-deoxy-scyllo-inosamine dehydrogenase (kanE) from Streptomyces kanamyceticus.